A 690-amino-acid chain; its full sequence is DNA ligase (690 aa).

NAD(+) is bound by residues 49–53, 98–99, and Glu129; these read DAEYD and SL. Lys131 serves as the catalytic N6-AMP-lysine intermediate. Positions 152, 191, 308, and 332 each coordinate NAD(+). 4 residues coordinate Zn(2+): Cys426, Cys429, Cys444, and Cys450. Residues 607–690 form the BRCT domain; that stretch reads EDAARLEGLT…ALLREQGIDA (84 aa).

Belongs to the NAD-dependent DNA ligase family. LigA subfamily. Requires Mg(2+) as cofactor. It depends on Mn(2+) as a cofactor.

It catalyses the reaction NAD(+) + (deoxyribonucleotide)n-3'-hydroxyl + 5'-phospho-(deoxyribonucleotide)m = (deoxyribonucleotide)n+m + AMP + beta-nicotinamide D-nucleotide.. DNA ligase that catalyzes the formation of phosphodiester linkages between 5'-phosphoryl and 3'-hydroxyl groups in double-stranded DNA using NAD as a coenzyme and as the energy source for the reaction. It is essential for DNA replication and repair of damaged DNA. This chain is DNA ligase, found in Salinibacter ruber (strain DSM 13855 / M31).